Reading from the N-terminus, the 41-residue chain is MKALYMVFVLWVLIGCFLRLLKDEATVFGLWPLCSYRMLPF.

A signal peptide spans 1–22 (MKALYMVFVLWVLIGCFLRLLK).

The protein resides in the secreted. May play a role in protection or detoxification. In Mus musculus (Mouse), this protein is Submaxillary gland androgen-regulated protein 2, isoform beta (Smr2).